The chain runs to 29 residues: Neurotoxin BmK A3-6 (29 aa).

Contains 3 disulfide bonds. As to expression, expressed by the venom gland.

The protein localises to the secreted. The chain is Neurotoxin BmK A3-6 from Olivierus martensii (Manchurian scorpion).